We begin with the raw amino-acid sequence, 375 residues long: Alanine racemase (375 aa).

Lys45 (proton acceptor; specific for D-alanine) is an active-site residue. An N6-(pyridoxal phosphate)lysine modification is found at Lys45. Arg141 is a binding site for substrate. Tyr270 functions as the Proton acceptor; specific for L-alanine in the catalytic mechanism. Met318 provides a ligand contact to substrate.

Belongs to the alanine racemase family. Pyridoxal 5'-phosphate is required as a cofactor.

The catalysed reaction is L-alanine = D-alanine. It functions in the pathway amino-acid biosynthesis; D-alanine biosynthesis; D-alanine from L-alanine: step 1/1. Catalyzes the interconversion of L-alanine and D-alanine. May also act on other amino acids. This chain is Alanine racemase (alr), found in Pseudoalteromonas atlantica (strain T6c / ATCC BAA-1087).